Here is a 65-residue protein sequence, read N- to C-terminus: Adrenergic toxin rho-elapitoxin-Dp1a (65 aa).

Cystine bridges form between Cys-3–Cys-24, Cys-17–Cys-42, Cys-46–Cys-57, and Cys-58–Cys-63.

This sequence belongs to the three-finger toxin family. Short-chain subfamily. Aminergic toxin sub-subfamily. As to expression, expressed by the venom gland.

It localises to the secreted. This toxin shows activities on different G-protein coupled receptors. It is highly potent on various alpha-adrenoceptors (ADRA) (subnanomolar affinity for ADRA1A). Order of potency is the following: ADRA1A &gt; ADRA1B &gt; ADRA1D &gt; ADRA2C. It is also found to reversibly bind to muscarinic acetylcholine receptors (CHRM), but the affinity is much weaker (CHRM1 and CHRM2, Ki&gt;1 uM; CHRM3, Ki=140 nM; CHRM4, Ki=120 nM; CHRM5, Ki=350 nM). The chain is Adrenergic toxin rho-elapitoxin-Dp1a from Dendroaspis polylepis polylepis (Black mamba).